Consider the following 200-residue polypeptide: Recombination protein RecR (200 aa).

Residues 59-74 (CSVCGSLDTSDPCAIC) form a C4-type zinc finger. The 96-residue stretch at 82–177 (RLLCVVEEVG…SVTMLARGVP (96 aa)) folds into the Toprim domain.

The protein belongs to the RecR family.

Functionally, may play a role in DNA repair. It seems to be involved in an RecBC-independent recombinational process of DNA repair. It may act with RecF and RecO. This is Recombination protein RecR from Caulobacter sp. (strain K31).